The sequence spans 593 residues: CTD kinase subunit alpha (593 aa).

Composition is skewed to polar residues over residues M1–N17 and Q29–N51. Residues M1–P262 form a disordered region. Phosphoserine occurs at positions 56 and 58. Residues R90–F103 show a composition bias toward basic residues. A phosphoserine mark is found at S104 and S109. Residues S139–A152 show a composition bias toward low complexity. Residues Q160–S170 are compositionally biased toward polar residues. The segment covering I198 to S215 has biased composition (low complexity). Positions Y277–F561 constitute a Protein kinase domain. ATP-binding positions include I283–V291 and K306. D399 acts as the Proton acceptor in catalysis.

It belongs to the protein kinase superfamily. CMGC Ser/Thr protein kinase family. CDC2/CDKX subfamily. In terms of assembly, CTDK-I consists of three subunits, ctk1/lsk1, ctk2/lsc1 and ctk3 (also called alpha, beta and gamma). Interacts with ctk2/lsc1. This interaction is dependent on kinase activity.

Its subcellular location is the nucleus. It localises to the nucleolus. The enzyme catalyses [DNA-directed RNA polymerase] + ATP = phospho-[DNA-directed RNA polymerase] + ADP + H(+). Functionally, catalytic subunit of the CTDK-I complex, which hyperphosphorylates the C-terminal heptapeptide repeat domain (CTD) of the largest RNA polymerase II subunit. Involved in RNA polymerase II transcriptional elongation and pre-mRNA 3'-end processing. Together with ctk2/lsc1, required for the regulation of cytokinesis by phosphorylating 'Ser-2' residues found in the heptad repeats of the CTD. Required for nuclear localization of ctk2/lsc1. Positively regulates the septation initiation network (SIN) and promotes successful completion of cytokinesis in response to perturbation of the actomyosin ring. Acts in parallel to clp1 to promote actomyosin ring stability upon cytokinesis checkpoint activation. In Schizosaccharomyces pombe (strain 972 / ATCC 24843) (Fission yeast), this protein is CTD kinase subunit alpha.